The following is a 599-amino-acid chain: Serine hydroxymethyltransferase 6 (599 aa).

Residues 1 to 25 (MDRIAQSDLSLGFGSSHALPLPHPP) are disordered. Lysine 374 is subject to N6-(pyridoxal phosphate)lysine.

It belongs to the SHMT family. In terms of assembly, homotetramer. Pyridoxal 5'-phosphate serves as cofactor.

Its subcellular location is the cytoplasm. The enzyme catalyses (6R)-5,10-methylene-5,6,7,8-tetrahydrofolate + glycine + H2O = (6S)-5,6,7,8-tetrahydrofolate + L-serine. It functions in the pathway one-carbon metabolism; tetrahydrofolate interconversion. In terms of biological role, catalyzes the interconversion of serine and glycine. The chain is Serine hydroxymethyltransferase 6 (SHM6) from Arabidopsis thaliana (Mouse-ear cress).